We begin with the raw amino-acid sequence, 540 residues long: 2-isopropylmalate synthase (540 aa).

Residues 8–273 (VLIFDTTLRD…FFGRDQDSPT (266 aa)) enclose the Pyruvate carboxyltransferase domain. The Mn(2+) site is built by aspartate 17, histidine 208, histidine 210, and asparagine 244. The tract at residues 408–540 (QLQLVQVSCG…AVVLDARPTL (133 aa)) is regulatory domain.

Belongs to the alpha-IPM synthase/homocitrate synthase family. LeuA type 1 subfamily. Homodimer. Mn(2+) serves as cofactor.

Its subcellular location is the cytoplasm. The catalysed reaction is 3-methyl-2-oxobutanoate + acetyl-CoA + H2O = (2S)-2-isopropylmalate + CoA + H(+). The protein operates within amino-acid biosynthesis; L-leucine biosynthesis; L-leucine from 3-methyl-2-oxobutanoate: step 1/4. Catalyzes the condensation of the acetyl group of acetyl-CoA with 3-methyl-2-oxobutanoate (2-ketoisovalerate) to form 3-carboxy-3-hydroxy-4-methylpentanoate (2-isopropylmalate). The polypeptide is 2-isopropylmalate synthase (Parasynechococcus marenigrum (strain WH8102)).